The sequence spans 327 residues: Vacuolar protein sorting-associated protein 26A (327 aa).

Residues 306–327 (RTNFHQRFESPESQASAEQPEM) are disordered. Ser315 carries the post-translational modification Phosphoserine. Polar residues predominate over residues 316-327 (PESQASAEQPEM).

This sequence belongs to the VPS26 family. As to quaternary structure, component of the heterotrimeric retromer cargo-selective complex (CSC), also described as vacuolar protein sorting subcomplex (VPS), formed by VPS26 (VPS26A or VPS26B), VPS29 and VPS35. The CSC has a highly elongated structure with VPS26 and VPS29 binding independently at opposite distal ends of VPS35 as central platform. The CSC is believed to associate with variable sorting nexins to form functionally distinct retromer complex variants. The originally described retromer complex (also called SNX-BAR retromer) is a pentamer containing the CSC and a heterodimeric membrane-deforming subcomplex formed between SNX1 or SNX2 and SNX5 or SNX6 (also called SNX-BAR subcomplex); the respective CSC and SNX-BAR subcomplexes associate with low affinity. The CSC associates with SNX3 to form a SNX3-retromer complex. The CSC associates with SNX27, the WASH complex and the SNX-BAR subcomplex to form the SNX27-retromer complex. Interacts with VPS29, VPS35, SNX1, SNX2, SNX5, SNX6, SNX3, SNX27, RAB7A, ECPAS, EHD1, WASHC5, SORL1.

It localises to the cytoplasm. It is found in the endosome membrane. The protein resides in the early endosome. Acts as a component of the retromer cargo-selective complex (CSC). The CSC is believed to be the core functional component of retromer or respective retromer complex variants acting to prevent missorting of selected transmembrane cargo proteins into the lysosomal degradation pathway. The recruitment of the CSC to the endosomal membrane involves RAB7A and SNX3. The SNX-BAR retromer mediates retrograde transport of cargo proteins from endosomes to the trans-Golgi network (TGN) and is involved in endosome-to-plasma membrane transport for cargo protein recycling. The SNX3-retromer mediates the retrograde endosome-to-TGN transport of WLS distinct from the SNX-BAR retromer pathway. The SNX27-retromer is believed to be involved in endosome-to-plasma membrane trafficking and recycling of a broad spectrum of cargo proteins. The CSC seems to act as recruitment hub for other proteins, such as the WASH complex and TBC1D5. Required for retrograde transport of lysosomal enzyme receptor IGF2R. Required to regulate transcytosis of the polymeric immunoglobulin receptor (pIgR-pIgA). Required for the endosomal localization of WASHC2A (indicative for the WASH complex). Required for the endosomal localization of TBC1D5. Mediates retromer cargo recognition of SORL1 and is involved in trafficking of SORL1 implicated in sorting and processing of APP. Involved in retromer-independent lysosomal sorting of F2R. Involved in recycling of ADRB2. Enhances the affinity of SNX27 for PDZ-binding motifs in cargo proteins. The protein is Vacuolar protein sorting-associated protein 26A of Homo sapiens (Human).